We begin with the raw amino-acid sequence, 426 residues long: Histidine--tRNA ligase (426 aa).

This sequence belongs to the class-II aminoacyl-tRNA synthetase family. As to quaternary structure, homodimer.

It is found in the cytoplasm. The catalysed reaction is tRNA(His) + L-histidine + ATP = L-histidyl-tRNA(His) + AMP + diphosphate + H(+). In Legionella pneumophila subsp. pneumophila (strain Philadelphia 1 / ATCC 33152 / DSM 7513), this protein is Histidine--tRNA ligase.